Consider the following 451-residue polypeptide: Protein FAM117A (451 aa).

Residues 1 to 25 (MSGAAAGGRGGGSWGPGRGGAGGLR) are compositionally biased toward gly residues. 2 disordered regions span residues 1 to 83 (MSGA…RPQP) and 164 to 183 (RTKLSRSGKEKERSCPVQGD). Phosphoserine occurs at positions 29 and 67. Positions 149 to 175 (TDHRKEITKLKQQLQRTKLSRSGKEKE) form a coiled coil. Phosphoserine occurs at positions 193 and 213. The interval 242-293 (DGHRAPAPPQNSSCDHSLLLEPGNLTSSPSVPLASPQPPSQASREEHQGATE) is disordered. Phosphoserine is present on residues S318 and S326. Phosphothreonine is present on T353. Residues 403-451 (SPGSPLPTASPRAPRKGPEASKASSLPSEPWQRSPPSEESVLFQSSLVV) are disordered. Residues S412 and S426 each carry the phosphoserine modification. Residues 436-451 (SPPSEESVLFQSSLVV) are compositionally biased toward polar residues.

Belongs to the FAM117 family.

The polypeptide is Protein FAM117A (Fam117a) (Mus musculus (Mouse)).